The sequence spans 203 residues: MLTEQQRRELDWEKTDGLMPAIVQHAVSGEVLTLGYMNPQALDKTIESGHVTFFSRTKQRLWTKGETSGHVLNVVSIAPDCDNDTLLVLANPVGPTCHKGTSSCFGDASHQWLFLYQLEQLLAERKTADPASSYTAKLYASGTKRIAQKVGEEGVETALAATVNDRFELTNEASDLMYHLLVLLQDQDLNLTTVIDDLRKRHQ.

The segment at 1–114 (MLTEQQRREL…FGDASHQWLF (114 aa)) is phosphoribosyl-AMP cyclohydrolase. The phosphoribosyl-ATP pyrophosphohydrolase stretch occupies residues 115–203 (LYQLEQLLAE…VIDDLRKRHQ (89 aa)).

The protein in the N-terminal section; belongs to the PRA-CH family. This sequence in the C-terminal section; belongs to the PRA-PH family.

The protein resides in the cytoplasm. The enzyme catalyses 1-(5-phospho-beta-D-ribosyl)-ATP + H2O = 1-(5-phospho-beta-D-ribosyl)-5'-AMP + diphosphate + H(+). It carries out the reaction 1-(5-phospho-beta-D-ribosyl)-5'-AMP + H2O = 1-(5-phospho-beta-D-ribosyl)-5-[(5-phospho-beta-D-ribosylamino)methylideneamino]imidazole-4-carboxamide. The protein operates within amino-acid biosynthesis; L-histidine biosynthesis; L-histidine from 5-phospho-alpha-D-ribose 1-diphosphate: step 2/9. It participates in amino-acid biosynthesis; L-histidine biosynthesis; L-histidine from 5-phospho-alpha-D-ribose 1-diphosphate: step 3/9. This chain is Histidine biosynthesis bifunctional protein HisIE (hisI), found in Salmonella typhi.